We begin with the raw amino-acid sequence, 338 residues long: Lipoate-protein ligase A (338 aa).

The region spanning 29-216 is the BPL/LPL catalytic domain; that stretch reads PATQRVLFLW…AFFAHYGERI (188 aa). Residues Arg71, 76–79, and Lys134 contribute to the ATP site; that span reads GAVF. Lys134 contacts (R)-lipoate.

The protein belongs to the LplA family. In terms of assembly, monomer.

It localises to the cytoplasm. It carries out the reaction L-lysyl-[lipoyl-carrier protein] + (R)-lipoate + ATP = N(6)-[(R)-lipoyl]-L-lysyl-[lipoyl-carrier protein] + AMP + diphosphate + H(+). The protein operates within protein modification; protein lipoylation via exogenous pathway; protein N(6)-(lipoyl)lysine from lipoate: step 1/2. It participates in protein modification; protein lipoylation via exogenous pathway; protein N(6)-(lipoyl)lysine from lipoate: step 2/2. In terms of biological role, catalyzes both the ATP-dependent activation of exogenously supplied lipoate to lipoyl-AMP and the transfer of the activated lipoyl onto the lipoyl domains of lipoate-dependent enzymes. This is Lipoate-protein ligase A from Salmonella typhi.